The primary structure comprises 345 residues: Large ribosomal subunit protein uL4 (345 aa).

The residue at position 2 (A2) is an N-acetylalanine.

Belongs to the universal ribosomal protein uL4 family.

The chain is Large ribosomal subunit protein uL4 (rpl-4) from Caenorhabditis elegans.